The sequence spans 132 residues: Large ribosomal subunit protein uL14 (132 aa).

Belongs to the universal ribosomal protein uL14 family. In terms of assembly, part of the 50S ribosomal subunit. Forms a cluster with proteins L3 and L24e, part of which may contact the 16S rRNA in 2 intersubunit bridges.

In terms of biological role, binds to 23S rRNA. Forms part of two intersubunit bridges in the 70S ribosome. The polypeptide is Large ribosomal subunit protein uL14 (Thermoplasma volcanium (strain ATCC 51530 / DSM 4299 / JCM 9571 / NBRC 15438 / GSS1)).